We begin with the raw amino-acid sequence, 1727 residues long: Nucleoporin alm1 (1727 aa).

Coiled-coil stretches lie at residues 57–361 (QEVN…KNTS), 443–463 (NFLS…QAEL), 542–740 (IKEA…AEEL), 804–1106 (AARK…INES), 1223–1427 (GERS…QLNK), 1497–1555 (NEEE…AESA), and 1601–1664 (QKEW…KKDS). Positions 1423–1448 (EQLNKPSATPTATTQSEPSTVSLEEF) are enriched in polar residues. Disordered regions lie at residues 1423 to 1459 (EQLN…SSTQ), 1477 to 1500 (EKVR…NEEE), and 1656 to 1727 (LEQS…KKAK). Composition is skewed to polar residues over residues 1672–1684 (ASKN…SNSE) and 1702–1714 (VDTN…SSSD). S1706 is subject to Phosphoserine.

The protein resides in the nucleus. It is found in the nuclear pore complex. It localises to the nucleus envelope. Its function is as follows. Maintains the proteasome and its anchor cut8 at the nucleus envelope and is required for kinetochore component proteostasis. Proper kinetochore stoichiometry ensures the correct attachment of kinetochores to spindle microtubules during cytokinesis. Required for the localization of spindle assembly checkpoint (SAC) protein mad2 and bub1 to the nucleus envelope during interphase, but not their localization during mitosis. In Schizosaccharomyces pombe (strain 972 / ATCC 24843) (Fission yeast), this protein is Nucleoporin alm1.